Reading from the N-terminus, the 206-residue chain is Sortase A (206 aa).

Residues 1-6 are Cytoplasmic-facing; the sequence is MKKWTN. Residues 7–24 traverse the membrane as a helical segment; sequence RLMTIAGVVLILVAAYLF. At 25-206 the chain is on the extracellular side; it reads AKPHIDNYLH…RKIFVATEVK (182 aa). The disordered stretch occupies residues 49–69; sequence VKEQASKDKKQQAKPQIPKDK. 4 residues coordinate Ca(2+): Glu-105, Glu-108, Asp-112, and Asn-114. The active-site Proton donor/acceptor is the His-120. Glu-171 lines the Ca(2+) pocket. Cys-184 serves as the catalytic Acyl-thioester intermediate.

The protein belongs to the bacterial sortase family. Class A subfamily. Monomer and homodimer; in equilibrium.

Its subcellular location is the cell membrane. The catalysed reaction is The enzyme catalyzes a cell wall sorting reaction in which a surface protein with a sorting signal containing a LPXTG motif is cleaved between the Thr and Gly residue. The resulting threonine carboxyl end of the protein is covalently attached to a pentaglycine cross-bridge of peptidoglycan.. Its activity is regulated as follows. Sortase activity is regulated by monomer-homodimer equilibrium. Mutant cells with monomeric SrtA display more adhesive proteins on the cell surface and are more invasive than wild-type cells, which have majority of SrtA in dimeric form. Dimerization may suppress the enzymatic activity on cell membranes. Stimulated by calcium ions, which promote substrate binding. Calcium ions bind to SrtA and modulate both the structure and dynamics of a large active site loop. Can also be stimulated, to a lesser extent, by Mg(2+) and Mn(2+). Inhibited by sulfhydryl-modifying reagents. Its function is as follows. Transpeptidase that anchors surface proteins to the cell wall. Recognizes and modifies its substrate by proteolytic cleavage of a C-terminal sorting signal. Following cleavage, a covalent intermediate is formed via a thioester bond between the sortase and its substrate, which is then transferred and covalently attached to the cell wall. This sortase recognizes a Leu-Pro-x-Thr-Gly (LPXTG) motif, which is cleaved by the sortase between the threonine and glycine residues. Utilizes lipid II as the peptidoglycan substrate for the sorting reaction. Responsible for the display of important virulence factors. Important for interactions with the host and host colonization during infection. This is Sortase A from Staphylococcus aureus (strain NCTC 8325 / PS 47).